Consider the following 139-residue polypeptide: Envelope glycoprotein N (139 aa).

Topologically, residues 1–100 (MACGKTESGD…CHSHFYGLSV (100 aa)) are virion surface. A helical membrane pass occupies residues 101–121 (SSFASIWMMVNAIVFICAFGV). Topologically, residues 122–139 (FMRHWCYKAFTSDTAKGY) are intravirion.

Belongs to the herpesviridae glycoprotein N family. As to quaternary structure, interacts (via N-terminus) with gM (via N-terminus). The gM-gN heterodimer forms the gCII complex.

Its subcellular location is the virion membrane. The protein resides in the host membrane. The protein localises to the host Golgi apparatus. It is found in the host trans-Golgi network. Envelope glycoprotein necessary for proper maturation of gM and modulation of its membrane fusion activity. Also plays a critical role in virion morphogenesis. In Mus musculus (Mouse), this protein is Envelope glycoprotein N.